The sequence spans 158 residues: SsrA-binding protein (158 aa).

The protein belongs to the SmpB family.

The protein localises to the cytoplasm. Required for rescue of stalled ribosomes mediated by trans-translation. Binds to transfer-messenger RNA (tmRNA), required for stable association of tmRNA with ribosomes. tmRNA and SmpB together mimic tRNA shape, replacing the anticodon stem-loop with SmpB. tmRNA is encoded by the ssrA gene; the 2 termini fold to resemble tRNA(Ala) and it encodes a 'tag peptide', a short internal open reading frame. During trans-translation Ala-aminoacylated tmRNA acts like a tRNA, entering the A-site of stalled ribosomes, displacing the stalled mRNA. The ribosome then switches to translate the ORF on the tmRNA; the nascent peptide is terminated with the 'tag peptide' encoded by the tmRNA and targeted for degradation. The ribosome is freed to recommence translation, which seems to be the essential function of trans-translation. The chain is SsrA-binding protein from Chloroflexus aggregans (strain MD-66 / DSM 9485).